The primary structure comprises 376 residues: uncharacterized protein (376 aa).

Low complexity-rich tracts occupy residues 73–99 (NNSI…NNNN) and 228–243 (SSFS…TVSS). 2 disordered regions span residues 73 to 100 (NNSI…NNNL) and 222 to 269 (EQDP…KISD).

This is an uncharacterized protein from Saccharomyces cerevisiae (strain ATCC 204508 / S288c) (Baker's yeast).